A 379-amino-acid polypeptide reads, in one-letter code: 3-dehydroquinate synthase (379 aa).

Residues 113–117 (GVIGD), 137–138 (TS), Lys-150, and Lys-159 each bind NAD(+). The Zn(2+) site is built by Glu-192, His-256, and His-274.

It belongs to the sugar phosphate cyclases superfamily. Dehydroquinate synthase family. It depends on Co(2+) as a cofactor. Requires Zn(2+) as cofactor. NAD(+) is required as a cofactor.

The protein localises to the cytoplasm. The enzyme catalyses 7-phospho-2-dehydro-3-deoxy-D-arabino-heptonate = 3-dehydroquinate + phosphate. Its pathway is metabolic intermediate biosynthesis; chorismate biosynthesis; chorismate from D-erythrose 4-phosphate and phosphoenolpyruvate: step 2/7. Catalyzes the conversion of 3-deoxy-D-arabino-heptulosonate 7-phosphate (DAHP) to dehydroquinate (DHQ). The polypeptide is 3-dehydroquinate synthase (Zymomonas mobilis subsp. mobilis (strain ATCC 31821 / ZM4 / CP4)).